A 27-amino-acid polypeptide reads, in one-letter code: Potassium channel toxin alpha-KTx 9.11 (27 aa).

3 disulfides stabilise this stretch: Cys3–Cys19, Cys6–Cys23, and Cys10–Cys25.

It belongs to the short scorpion toxin superfamily. Potassium channel inhibitor family. Alpha-KTx 09 subfamily. In terms of tissue distribution, expressed by the venom gland.

The protein resides in the secreted. Its function is as follows. May play a role in blocking voltage-gated potassium channels Kv1.2/KCNA2, Kv1.3/KCNA3 and Kv1.6/KCNA6 to a lesser extent. The protein is Potassium channel toxin alpha-KTx 9.11 of Mesobuthus gibbosus (Mediterranean checkered scorpion).